The following is a 367-amino-acid chain: Hyaluronidase (367 aa).

2 cysteine pairs are disulfide-bonded: Cys-48/Cys-337 and Cys-214/Cys-226. The N-linked (GlcNAc...) asparagine glycan is linked to Asn-108. Glu-138 serves as the catalytic Proton donor. Asn-354 carries an N-linked (GlcNAc...) asparagine glycan.

This sequence belongs to the glycosyl hydrolase 56 family.

The catalysed reaction is Random hydrolysis of (1-&gt;4)-linkages between N-acetyl-beta-D-glucosamine and D-glucuronate residues in hyaluronate.. In terms of biological role, may play a role in reproduction. The polypeptide is Hyaluronidase (Polistes annularis (Paper wasp)).